A 98-amino-acid chain; its full sequence is MSLTYMNMFMAFTISLLGLLMYRSHMMSSLLCLEGMMLSLFVMMTITILNTHLTLASMLPIILLVFAACEAALGLSLLVMVSTTYGMDYVQNLNLLQC.

A run of 3 helical transmembrane segments spans residues 1–21 (MSLT…GLLM), 29–49 (SLLC…ITIL), and 61–81 (IILL…LVMV).

The protein belongs to the complex I subunit 4L family. As to quaternary structure, core subunit of respiratory chain NADH dehydrogenase (Complex I) which is composed of 45 different subunits.

It localises to the mitochondrion inner membrane. It catalyses the reaction a ubiquinone + NADH + 5 H(+)(in) = a ubiquinol + NAD(+) + 4 H(+)(out). Core subunit of the mitochondrial membrane respiratory chain NADH dehydrogenase (Complex I) which catalyzes electron transfer from NADH through the respiratory chain, using ubiquinone as an electron acceptor. Part of the enzyme membrane arm which is embedded in the lipid bilayer and involved in proton translocation. In Artibeus jamaicensis (Jamaican fruit-eating bat), this protein is NADH-ubiquinone oxidoreductase chain 4L (MT-ND4L).